The sequence spans 403 residues: S-adenosylmethionine synthase (403 aa).

H17 serves as a coordination point for ATP. D19 is a Mg(2+) binding site. E45 contributes to the K(+) binding site. The L-methionine site is built by E58 and Q104. The tract at residues 104-114 is flexible loop; the sequence is QSPDIAQGVDT. ATP is bound by residues 179–181, 250–251, D259, 265–266, A282, and K286; these read DGK, KF, and RK. Position 259 (D259) interacts with L-methionine. K290 lines the L-methionine pocket.

The protein belongs to the AdoMet synthase family. Homotetramer; dimer of dimers. The cofactor is Mg(2+). K(+) is required as a cofactor.

Its subcellular location is the cytoplasm. It catalyses the reaction L-methionine + ATP + H2O = S-adenosyl-L-methionine + phosphate + diphosphate. Its pathway is amino-acid biosynthesis; S-adenosyl-L-methionine biosynthesis; S-adenosyl-L-methionine from L-methionine: step 1/1. Functionally, catalyzes the formation of S-adenosylmethionine (AdoMet) from methionine and ATP. The overall synthetic reaction is composed of two sequential steps, AdoMet formation and the subsequent tripolyphosphate hydrolysis which occurs prior to release of AdoMet from the enzyme. The protein is S-adenosylmethionine synthase of Mycobacterium bovis (strain ATCC BAA-935 / AF2122/97).